We begin with the raw amino-acid sequence, 425 residues long: GTPase Obg (425 aa).

The region spanning 1-158 (MFIDKARIFV…RWITLELKMI (158 aa)) is the Obg domain. Positions 159-330 (ADVGLLGFPN…VIAYVSKMLK (172 aa)) constitute an OBG-type G domain. Residues 165 to 172 (GFPNVGKS), 190 to 194 (FTTLT), 212 to 215 (DIPG), 282 to 285 (NKFD), and 311 to 313 (SAA) each bind GTP. Residues S172 and T192 each coordinate Mg(2+). The region spanning 344 to 425 (YRPELDIGTE…IYELEFEFYN (82 aa)) is the OCT domain.

This sequence belongs to the TRAFAC class OBG-HflX-like GTPase superfamily. OBG GTPase family. As to quaternary structure, monomer. It depends on Mg(2+) as a cofactor.

It is found in the cytoplasm. An essential GTPase which binds GTP, GDP and possibly (p)ppGpp with moderate affinity, with high nucleotide exchange rates and a fairly low GTP hydrolysis rate. Plays a role in control of the cell cycle, stress response, ribosome biogenesis and in those bacteria that undergo differentiation, in morphogenesis control. The sequence is that of GTPase Obg from Clostridioides difficile (strain 630) (Peptoclostridium difficile).